Here is a 268-residue protein sequence, read N- to C-terminus: GTP cyclohydrolase FolE2 (268 aa).

It belongs to the GTP cyclohydrolase IV family.

The catalysed reaction is GTP + H2O = 7,8-dihydroneopterin 3'-triphosphate + formate + H(+). It participates in cofactor biosynthesis; 7,8-dihydroneopterin triphosphate biosynthesis; 7,8-dihydroneopterin triphosphate from GTP: step 1/1. Converts GTP to 7,8-dihydroneopterin triphosphate. This Janthinobacterium sp. (strain Marseille) (Minibacterium massiliensis) protein is GTP cyclohydrolase FolE2.